The chain runs to 481 residues: ATP synthase subunit beta, chloroplastic (481 aa).

161–168 (GGAGVGKT) is a binding site for ATP.

Belongs to the ATPase alpha/beta chains family. As to quaternary structure, F-type ATPases have 2 components, CF(1) - the catalytic core - and CF(0) - the membrane proton channel. CF(1) has five subunits: alpha(3), beta(3), gamma(1), delta(1), epsilon(1). CF(0) has four main subunits: a(1), b(1), b'(1) and c(9-12).

Its subcellular location is the plastid. It is found in the chloroplast thylakoid membrane. The enzyme catalyses ATP + H2O + 4 H(+)(in) = ADP + phosphate + 5 H(+)(out). Functionally, produces ATP from ADP in the presence of a proton gradient across the membrane. The catalytic sites are hosted primarily by the beta subunits. The protein is ATP synthase subunit beta, chloroplastic of Mesostigma viride (Green alga).